A 403-amino-acid polypeptide reads, in one-letter code: Large ribosomal subunit protein uL3 (403 aa).

The tract at residues 1-37 is disordered; it reads MSHRKFSAPRHGSLGFLPRKRSSRHRGKVKSFPKDDP. A Phosphoserine modification is found at S13. Positions 18-31 are enriched in basic residues; sequence PRKRSSRHRGKVKS. Residue K39 forms a Glycyl lysine isopeptide (Lys-Gly) (interchain with G-Cter in SUMO2) linkage. Residue K136 is modified to N6-acetyllysine. Glycyl lysine isopeptide (Lys-Gly) (interchain with G-Cter in SUMO2) cross-links involve residues K224 and K226. The residue at position 245 (H245) is a Tele-methylhistidine. N6-acetyllysine; alternate occurs at positions 286 and 294. K286 participates in a covalent cross-link: Glycyl lysine isopeptide (Lys-Gly) (interchain with G-Cter in SUMO2); alternate. K294 is covalently cross-linked (Glycyl lysine isopeptide (Lys-Gly) (interchain with G-Cter in SUMO1); alternate). Residue S304 is modified to Phosphoserine. The residue at position 366 (K366) is an N6-acetyllysine; alternate. A Glycyl lysine isopeptide (Lys-Gly) (interchain with G-Cter in SUMO2); alternate cross-link involves residue K366. An N6-acetyllysine modification is found at K373. Glycyl lysine isopeptide (Lys-Gly) (interchain with G-Cter in SUMO2) cross-links involve residues K386, K393, and K399.

The protein belongs to the universal ribosomal protein uL3 family. Component of the large ribosomal subunit. Interacts with DHX33. In terms of processing, constitutively monomethylated at His-245 by METTL18. Methylation at His-245 regulates translation elongation by slowing ribosome traversal on tyrosine codons: slower elongation provides enough time for proper folding of synthesized proteins and prevents cellular aggregation of tyrosine-rich proteins. It is not required for incorporation of RPL3 into ribosomes.

It is found in the nucleus. It localises to the nucleolus. The protein resides in the cytoplasm. Its function is as follows. Component of the large ribosomal subunit. The ribosome is a large ribonucleoprotein complex responsible for the synthesis of proteins in the cell. This Oryctolagus cuniculus (Rabbit) protein is Large ribosomal subunit protein uL3 (RPL3).